Here is a 330-residue protein sequence, read N- to C-terminus: Ketol-acid reductoisomerase (NADP(+)) (330 aa).

The region spanning Leu3–Thr184 is the KARI N-terminal Rossmann domain. Residues Tyr26–Gln29, Ser52, and Ser54 each bind NADP(+). Residue His109 is part of the active site. Position 135 (Gly135) interacts with NADP(+). The 145-residue stretch at Ser185–Lys329 folds into the KARI C-terminal knotted domain. Residues Asp193, Glu197, Glu229, and Glu233 each contribute to the Mg(2+) site. Ser254 contributes to the substrate binding site.

This sequence belongs to the ketol-acid reductoisomerase family. It depends on Mg(2+) as a cofactor.

It carries out the reaction (2R)-2,3-dihydroxy-3-methylbutanoate + NADP(+) = (2S)-2-acetolactate + NADPH + H(+). The catalysed reaction is (2R,3R)-2,3-dihydroxy-3-methylpentanoate + NADP(+) = (S)-2-ethyl-2-hydroxy-3-oxobutanoate + NADPH + H(+). The protein operates within amino-acid biosynthesis; L-isoleucine biosynthesis; L-isoleucine from 2-oxobutanoate: step 2/4. It functions in the pathway amino-acid biosynthesis; L-valine biosynthesis; L-valine from pyruvate: step 2/4. In terms of biological role, involved in the biosynthesis of branched-chain amino acids (BCAA). Catalyzes an alkyl-migration followed by a ketol-acid reduction of (S)-2-acetolactate (S2AL) to yield (R)-2,3-dihydroxy-isovalerate. In the isomerase reaction, S2AL is rearranged via a Mg-dependent methyl migration to produce 3-hydroxy-3-methyl-2-ketobutyrate (HMKB). In the reductase reaction, this 2-ketoacid undergoes a metal-dependent reduction by NADPH to yield (R)-2,3-dihydroxy-isovalerate. This is Ketol-acid reductoisomerase (NADP(+)) from Helicobacter pylori (strain ATCC 700392 / 26695) (Campylobacter pylori).